A 781-amino-acid polypeptide reads, in one-letter code: Catalase-peroxidase (781 aa).

Positions 1-20 (MLYIYYLFKSLFFHTLFVFS) are cleaved as a signal peptide. The segment at residues 125–272 (WHSAGTYRIG…LAAVQMGLIY (148 aa)) is a cross-link (tryptophyl-tyrosyl-methioninium (Trp-Tyr) (with M-298)). The active-site Proton acceptor is the His-126. A disordered region spans residues 237 to 256 (VHHPDEHRGAKEKAAKNSDS). The segment at residues 272-298 (YVNPEGPDGRPDPLASARDIRETFARM) is a cross-link (tryptophyl-tyrosyl-methioninium (Tyr-Met) (with W-125)). His-313 contacts heme b. The tract at residues 317 to 336 (KTHGAAPADNVGPEPEAGEL) is disordered.

The protein belongs to the peroxidase family. Peroxidase/catalase subfamily. Homodimer or homotetramer. Requires heme b as cofactor. Post-translationally, formation of the three residue Trp-Tyr-Met cross-link is important for the catalase, but not the peroxidase activity of the enzyme.

It catalyses the reaction H2O2 + AH2 = A + 2 H2O. The enzyme catalyses 2 H2O2 = O2 + 2 H2O. Its function is as follows. Bifunctional enzyme with both catalase and broad-spectrum peroxidase activity. In Xylella fastidiosa (strain 9a5c), this protein is Catalase-peroxidase.